We begin with the raw amino-acid sequence, 161 residues long: Leucine-rich colipase-like protein 1 (161 aa).

Positions 1–25 are cleaved as a signal peptide; that stretch reads MSVSVWPPLLLLLLLLLLWAVPTFQ.

This Mus musculus (Mouse) protein is Leucine-rich colipase-like protein 1 (Lrcol1).